The primary structure comprises 432 residues: MASSVRLVKKPVLVAPVDPTPSTVLSLSSLDSQLFLRFPIEYLLVYASPHGVDRAVTAARVKAALARSLVPYYPLAGRVKTRPDSTGLDVVCQAQGAGLLEAVSDYTASDFQRAPRSVTEWRKLLLVEVFKVVPPLVVQLTWLSDGCVALGVGFSHCVIDGIGSSEFLNLFAELATGRARLSEFQPKPVWDRHLLNSAGRTNLGTHPEFGRVPDLSGFVTRFTQERLSPTSITFDKTWLKELKNIAMSTSQPGEFPYTSFEVLSGHIWRSWARSLNLPAKQVLKLLFSINIRNRVKPSLPAGYYGNAFVLGCAQTSVKDLTEKGLGYCADLVRGAKERVGDEYAREVVESVSWPRRASPDSVGVLIISQWSRLGLDRVDFGLGRPVQVGPICCDRYCLFLPVRDRTESVKVMVAVPTSAVDRYEYFIRSPYS.

Catalysis depends on proton acceptor residues H156 and D379.

Belongs to the plant acyltransferase family. Expressed in fruit.

It catalyses the reaction 2-(methylsulfanyl)acetyl-CoA + butan-1-ol = butyl 2-(methylsulfanyl)acetate + CoA. It carries out the reaction ethanol + acetyl-CoA = ethyl acetate + CoA. The catalysed reaction is butan-1-ol + acetyl-CoA = butyl acetate + CoA. The enzyme catalyses butan-1-ol + propanoyl-CoA = butyl propanoate + CoA. Functionally, involved in the biosynthesis of volatile esters which confer kiwifruit flavor. Alcohol acyl transferase that can use a wide range of alcohols as substrate to produce esters. Exhibits acetyl-CoA:alcohol O-acyltransferase activity. The protein is Alcohol acyltransferase 9 of Actinidia deliciosa (Kiwi).